The following is a 273-amino-acid chain: MGYEEAFFRWAFLIATVYVAYYFLVSSDKKLATKPQKSKLTKLGKQKQRQKQKNTKKDTLVNRETPSKKSQKLETSDALKSKSKDSSKKEPVVVPKKGTPKIFQENHKVKKVKSPKKEKLVGKNPAEKEDTTDVEDTQKLEQKHSTTPSSLKMKSSISLAAITADDSLHNSFSSNDIDDGFQTVTSSRSYGKKKSTEPLTKRQRQNQQKKLRAKEMQELADEEQRRRLAAHRKELHEANRPRGGLNNSSRSAYSYINNGQAGSSKGNRYDSLW.

The helical transmembrane segment at 7-25 threads the bilayer; the sequence is FFRWAFLIATVYVAYYFLV. 2 disordered regions span residues 34 to 154 and 168 to 273; these read KPQK…LKMK and LHNS…DSLW. The segment covering 36-54 has biased composition (basic residues); that stretch reads QKSKLTKLGKQKQRQKQKN. Basic and acidic residues predominate over residues 55–91; the sequence is TKKDTLVNRETPSKKSQKLETSDALKSKSKDSSKKEP. Over residues 92–101 the composition is skewed to low complexity; it reads VVVPKKGTPK. The span at 115-144 shows a compositional bias: basic and acidic residues; it reads PKKEKLVGKNPAEKEDTTDVEDTQKLEQKH. The span at 145–154 shows a compositional bias: polar residues; it reads STTPSSLKMK. Positions 201 to 212 are enriched in basic residues; that stretch reads KRQRQNQQKKLR. Positions 213 to 240 are enriched in basic and acidic residues; the sequence is AKEMQELADEEQRRRLAAHRKELHEANR. Polar residues predominate over residues 245–266; the sequence is LNNSSRSAYSYINNGQAGSSKG.

It localises to the cytoplasm. The protein resides in the membrane. This is an uncharacterized protein from Schizosaccharomyces pombe (strain 972 / ATCC 24843) (Fission yeast).